The following is a 1454-amino-acid chain: Serine/threonine-protein kinase VPS15 (1454 aa).

Gly2 carries the N-myristoyl glycine lipid modification. The 274-residue stretch at 27–300 folds into the Protein kinase domain; sequence VHYVSQLNSS…LLNKYRGIFF (274 aa). ATP is bound by residues 33-41 and Lys54; that span reads LNSSRFLKT. Asp147 functions as the Proton acceptor in the catalytic mechanism. HEAT repeat units lie at residues 460–497, 576–613, 615–652, and 654–691; these read NKID…SVRK, KLIQ…FFGR, RTND…LLGT, and TLEQ…TGLI. WD repeat units lie at residues 1078 to 1118, 1126 to 1165, 1229 to 1268, 1275 to 1315, 1344 to 1382, and 1422 to 1454; these read NEPN…VGEV, DCSS…QESE, PRHG…LIRS, APIT…CQYA, RSLN…SSKA, and YHHD…GIFQ.

The protein belongs to the protein kinase superfamily. Ser/Thr protein kinase family. As to quaternary structure, component of the autophagy-specific VPS34 PI3-kinase complex I composed of VPS15, VPS30, VPS34, ATG14 and ATG38; and of the VPS34 PI3-kinase complex II composed of VPS15, VPS30, VPS34 and VPS38. Interacts directly with ATG14 and GPA1. Interacts directly with VPS34. Post-translationally, autophosphorylated.

Its subcellular location is the golgi apparatus. The protein resides in the trans-Golgi network membrane. It is found in the endosome membrane. It catalyses the reaction L-seryl-[protein] + ATP = O-phospho-L-seryl-[protein] + ADP + H(+). It carries out the reaction L-threonyl-[protein] + ATP = O-phospho-L-threonyl-[protein] + ADP + H(+). Functionally, serine/threonine-protein kinase required for cytoplasm to vacuole transport (Cvt) and autophagy as a part of the autophagy-specific VPS34 PI3-kinase complex I. This complex is essential to recruit the ATG8-phosphatidylinositol conjugate and the ATG12-ATG5 conjugate to the pre-autophagosomal structure. Is also involved in endosome-to-Golgi retrograde transport as part of the VPS34 PI3-kinase complex II. This second complex is required for the endosome-to-Golgi retrieval of PEP1 and KEX2, and the recruitment of VPS5 and VPS7, two components of the retromer complex, to endosomal membranes (probably through the synthesis of a specific pool of phosphatidylinositol 3-phosphate recruiting the retromer to the endosomes). By regulating VPS34 kinase activity, VPS15 appears to be essential for the efficient delivery of soluble hydrolases to the yeast vacuole. May function as a G protein beta subunit to propagate the pheromone response at the endosome with GPA1. The sequence is that of Serine/threonine-protein kinase VPS15 from Saccharomyces cerevisiae (strain ATCC 204508 / S288c) (Baker's yeast).